Consider the following 474-residue polypeptide: MTKGDWEAVIGLEVHAQVSSKTKLFSSSSTEFGAEHNTQVSLVDAAMPGTLPILNYYSIEQAIRTGLALSAEINKSSYFDRKNYFYPDLPQGYQITQFFEPIVKNGRIFINNNKKEVRIARIHLEQDAGKSIHEESKTYVDLNRAGVALMEIVSEPDLRSSEEAAEFMKKLRQILRYIGSCDGDMEKGSLRCDANVSVRPKGSSTFGTRCEIKNLNSICYIMQAIDYEIQRQIEILESGEKISQDTLLFDVSLGKTKVMRNKEDASDYRYFPEPDLLPVEISQDKIDSIRSSLPELPDQKKLRYIRELSINKYDADVITSDKAIANYFEELIKKHDSKLAVTWLTVELFGRLNKAGIDIVSSPIKANALSELLDFIVDGTISARLGKQVFDIMFETGKPASLIIKEQDLKQITDKGQISEIIDKIINDNQDKVQEYQNGKTKLYGFFVGEVMKLTKGKASPDVVNFILSEKLSS.

This sequence belongs to the GatB/GatE family. GatB subfamily. As to quaternary structure, heterotrimer of A, B and C subunits.

It carries out the reaction L-glutamyl-tRNA(Gln) + L-glutamine + ATP + H2O = L-glutaminyl-tRNA(Gln) + L-glutamate + ADP + phosphate + H(+). It catalyses the reaction L-aspartyl-tRNA(Asn) + L-glutamine + ATP + H2O = L-asparaginyl-tRNA(Asn) + L-glutamate + ADP + phosphate + 2 H(+). Allows the formation of correctly charged Asn-tRNA(Asn) or Gln-tRNA(Gln) through the transamidation of misacylated Asp-tRNA(Asn) or Glu-tRNA(Gln) in organisms which lack either or both of asparaginyl-tRNA or glutaminyl-tRNA synthetases. The reaction takes place in the presence of glutamine and ATP through an activated phospho-Asp-tRNA(Asn) or phospho-Glu-tRNA(Gln). The sequence is that of Aspartyl/glutamyl-tRNA(Asn/Gln) amidotransferase subunit B from Wolbachia sp. subsp. Brugia malayi (strain TRS).